Consider the following 220-residue polypeptide: Orotate phosphoribosyltransferase (220 aa).

Lys-26 is a 5-phospho-alpha-D-ribose 1-diphosphate binding site. 34–35 (FF) lines the orotate pocket. Residues 72–73 (YK), Arg-101, Lys-102, Lys-105, His-107, and 126–134 (DDVITAGTS) each bind 5-phospho-alpha-D-ribose 1-diphosphate. Thr-130 and Arg-158 together coordinate orotate.

The protein belongs to the purine/pyrimidine phosphoribosyltransferase family. PyrE subfamily. Homodimer. The cofactor is Mg(2+).

It catalyses the reaction orotidine 5'-phosphate + diphosphate = orotate + 5-phospho-alpha-D-ribose 1-diphosphate. Its pathway is pyrimidine metabolism; UMP biosynthesis via de novo pathway; UMP from orotate: step 1/2. In terms of biological role, catalyzes the transfer of a ribosyl phosphate group from 5-phosphoribose 1-diphosphate to orotate, leading to the formation of orotidine monophosphate (OMP). This Bordetella avium (strain 197N) protein is Orotate phosphoribosyltransferase.